Here is a 225-residue protein sequence, read N- to C-terminus: Thymidylate kinase (225 aa).

Residue 9–16 (GIEGCGKT) coordinates ATP.

Belongs to the thymidylate kinase family.

It carries out the reaction dTMP + ATP = dTDP + ADP. Its function is as follows. Phosphorylation of dTMP to form dTDP in both de novo and salvage pathways of dTTP synthesis. The chain is Thymidylate kinase from Citrifermentans bemidjiense (strain ATCC BAA-1014 / DSM 16622 / JCM 12645 / Bem) (Geobacter bemidjiensis).